Reading from the N-terminus, the 341-residue chain is Thymidine kinase (341 aa).

ATP is bound at residue 19 to 26 (GAYGIGKT). Glu48 acts as the Proton acceptor in catalysis. Substrate is bound by residues Tyr66 and Gln90. Arg183 is an ATP binding site. Arg189 provides a ligand contact to substrate.

This sequence belongs to the herpesviridae thymidine kinase family. Homodimer.

The enzyme catalyses thymidine + ATP = dTMP + ADP + H(+). In terms of biological role, catalyzes the transfer of the gamma-phospho group of ATP to thymidine to generate dTMP in the salvage pathway of pyrimidine synthesis. The dTMP serves as a substrate for DNA polymerase during viral DNA replication. Allows the virus to be reactivated and to grow in non-proliferative cells lacking a high concentration of phosphorylated nucleic acid precursors. In Varicella-zoster virus (strain Dumas) (HHV-3), this protein is Thymidine kinase.